The sequence spans 360 residues: uncharacterized protein (360 aa).

This is an uncharacterized protein from Ostreid herpesvirus 1 (isolate France) (OsHV-1).